The chain runs to 96 residues: Protein RnfH (96 aa).

The protein belongs to the UPF0125 (RnfH) family.

This Escherichia fergusonii (strain ATCC 35469 / DSM 13698 / CCUG 18766 / IAM 14443 / JCM 21226 / LMG 7866 / NBRC 102419 / NCTC 12128 / CDC 0568-73) protein is Protein RnfH.